The primary structure comprises 306 residues: Large ribosomal subunit protein uL2m (306 aa).

Residues 1 to 60 (MALRVVTRALGSLSLTPRIAAVPGPSLLPAAQVTNNVLLQLPSASMLLPSRPLLTSVALS) constitute a mitochondrion transit peptide.

It belongs to the universal ribosomal protein uL2 family. Component of the mitochondrial ribosome large subunit (39S) which comprises a 16S rRNA and about 50 distinct proteins.

It localises to the mitochondrion. This is Large ribosomal subunit protein uL2m (MRPL2) from Bos taurus (Bovine).